The chain runs to 273 residues: NADPH-dependent 7-cyano-7-deazaguanine reductase (273 aa).

81–83 (VES) is a binding site for substrate. 83–84 (SK) provides a ligand contact to NADPH. The active-site Thioimide intermediate is cysteine 179. The Proton donor role is filled by aspartate 186. 218–219 (AE) lines the substrate pocket. Position 247 to 248 (247 to 248 (RG)) interacts with NADPH.

Belongs to the GTP cyclohydrolase I family. QueF type 2 subfamily. In terms of assembly, homodimer.

The protein resides in the cytoplasm. The enzyme catalyses 7-aminomethyl-7-carbaguanine + 2 NADP(+) = 7-cyano-7-deazaguanine + 2 NADPH + 3 H(+). The protein operates within tRNA modification; tRNA-queuosine biosynthesis. In terms of biological role, catalyzes the NADPH-dependent reduction of 7-cyano-7-deazaguanine (preQ0) to 7-aminomethyl-7-deazaguanine (preQ1). This Rickettsia felis (strain ATCC VR-1525 / URRWXCal2) (Rickettsia azadi) protein is NADPH-dependent 7-cyano-7-deazaguanine reductase.